Here is a 136-residue protein sequence, read N- to C-terminus: Nucleoside diphosphate kinase (136 aa).

ATP is bound by residues K10, F58, R86, T92, R104, and N114. H117 (pros-phosphohistidine intermediate) is an active-site residue.

The protein belongs to the NDK family. Homotetramer. The cofactor is Mg(2+).

It localises to the cytoplasm. It carries out the reaction a 2'-deoxyribonucleoside 5'-diphosphate + ATP = a 2'-deoxyribonucleoside 5'-triphosphate + ADP. It catalyses the reaction a ribonucleoside 5'-diphosphate + ATP = a ribonucleoside 5'-triphosphate + ADP. Its function is as follows. Major role in the synthesis of nucleoside triphosphates other than ATP. The ATP gamma phosphate is transferred to the NDP beta phosphate via a ping-pong mechanism, using a phosphorylated active-site intermediate. The protein is Nucleoside diphosphate kinase of Corynebacterium efficiens (strain DSM 44549 / YS-314 / AJ 12310 / JCM 11189 / NBRC 100395).